The following is a 388-amino-acid chain: P2X purinoceptor 4 (388 aa).

The Cytoplasmic segment spans residues 1–33 (MAGCCAALAAFLFEYDTPRIVLIRSRKVGLMNR). A helical membrane pass occupies residues 34-54 (AVQLLILAYVIGWVFVWEKGY). Topologically, residues 55–338 (QETDSVVSSV…KFDIIPTMIN (284 aa)) are extracellular. Residues lysine 67 and lysine 69 each contribute to the ATP site. CTP-binding residues include lysine 67 and lysine 69. N-linked (GlcNAc...) asparagine glycosylation is found at asparagine 75 and asparagine 110. 3 cysteine pairs are disulfide-bonded: cysteine 116–cysteine 165, cysteine 126–cysteine 149, and cysteine 132–cysteine 159. Asparagine 153 and asparagine 184 each carry an N-linked (GlcNAc...) asparagine glycan. ATP-binding residues include threonine 186 and leucine 188. Threonine 186 is a binding site for CTP. N-linked (GlcNAc...) asparagine glycosylation is found at asparagine 199 and asparagine 208. 2 disulfides stabilise this stretch: cysteine 217–cysteine 227 and cysteine 261–cysteine 270. 3 residues coordinate ATP: asparagine 293, arginine 295, and lysine 313. 3 residues coordinate CTP: asparagine 293, arginine 295, and lysine 313. Residues 339–359 (IGSGLALLGMATVLCDIIVLY) traverse the membrane as a helical segment. At 360-388 (CMKKRLYYREKKYKYVEDYEQGLASELDQ) the chain is on the cytoplasmic side.

Belongs to the P2X receptor family. As to quaternary structure, functional P2RXs are organized as homomeric and heteromeric trimers. Forms heterotrimer with P2RX1. Interacts with P2RX7 (via C-terminus); this interaction is functional only in the presence of ATP. Forms heterotrimer with P2RX4; functional differences between homomeric P2RX4 and P2RX4/6 heterotrimer are minor. Interacts with AP1M2.

It localises to the cell membrane. Its subcellular location is the lysosome membrane. The enzyme catalyses K(+)(in) = K(+)(out). It carries out the reaction Na(+)(in) = Na(+)(out). The catalysed reaction is Ca(2+)(in) = Ca(2+)(out). With respect to regulation, activated by ATP. pH-dependent and inhibited by acidic pH. In terms of biological role, ATP-gated nonselective transmembrane cation channel permeable to potassium, sodium and calcium. CTP, but not GTP or UTP, functions as a weak affinity agonist for P2RX4. Activated by extracellularly released ATP, it plays multiple role in immunity and central nervous system physiology. Plays a key role in initial steps of T-cell activation and Ca(2+) microdomain formation. Also participates in basal T-cell activity without TCR/CD3 stimulation. Promotes the differentiation and activation of Th17 cells via expression of retinoic acid-related orphan receptor C/RORC. Upon activation, drives microglia motility via the PI3K/Akt pathway. Could also function as an ATP-gated cation channel of lysosomal membranes. This Homo sapiens (Human) protein is P2X purinoceptor 4 (P2RX4).